The sequence spans 870 residues: Probable inorganic carbon transporter subunit DabA (870 aa).

Zn(2+)-binding residues include cysteine 381, aspartate 383, histidine 564, and cysteine 579.

The protein belongs to the inorganic carbon transporter (TC 9.A.2) DabA family. Forms a complex with DabB. Zn(2+) is required as a cofactor.

It is found in the cell membrane. Part of an energy-coupled inorganic carbon pump. The sequence is that of Probable inorganic carbon transporter subunit DabA from Geobacillus kaustophilus (strain HTA426).